The sequence spans 684 residues: MSTAASPAPAAPIRVAAGTTAGAAVRDAGLPGRGAPDAIVVVREADGRLRDLSWTPDADVEVVPVPADSEDGRSVIRHSAAHVLAQAVQDLFPEAKLGIGPPITDGFYYDFDVPRAFTPEDLEALEKKMRKIVKDGQLFERRVYESEEEARRELANEPYKLELVDDKSGDPEVMEVGGDELTAYDNLNPRTRERVWGDLCRGPHIPTTKYIPAFKLTRSSAAYWRGDQTNASLQRIYGTAWESQEALDRHLELIEEAQRRDHRKLGVELDLFSFPDELGSGLPVFHPKGGIVRKELEDYSRAKHLQAGYEFVNTPHITKEQLYVTSGHLEWYADGMFPAMHIDAEYDADGAVRKPGQNYYLKPMNCPMHHLIYRSRGRSYRELPLRLFEFGSVYRYEKSGVVHGLTRVRGMTQDDAHIYATREQMRDELTSLLQFVLDLLSDYGLDEYYLELSTKDPDKYVGSDEIWDEATETLREVAEASGLDLVPDPGGAAFYGPKISVQVKDALGRNWQMSTIQLDFNMPERFELEYTAADGSRQRPVLIHRALFGSIERFFGVLTEHYAGAFPAWLAPVQVVGIPVADAHIPYLEDVAAQLRSRGVRVEIDGSDDRMAKKIVNHTNQRVPFMLLAGDKDVAAGAVSFRFGDRTQINGVPRDEAVEAIVGWIVERRNTAPTADLVKAGAGT.

Residues 1–66 (MSTAASPAPA…DADVEVVPVP (66 aa)) enclose the TGS domain. The interval 261–567 (DHRKLGVELD…LTEHYAGAFP (307 aa)) is catalytic. Zn(2+)-binding residues include Cys366, His417, and His544.

The protein belongs to the class-II aminoacyl-tRNA synthetase family. Homodimer. Requires Zn(2+) as cofactor.

Its subcellular location is the cytoplasm. It catalyses the reaction tRNA(Thr) + L-threonine + ATP = L-threonyl-tRNA(Thr) + AMP + diphosphate + H(+). Functionally, catalyzes the attachment of threonine to tRNA(Thr) in a two-step reaction: L-threonine is first activated by ATP to form Thr-AMP and then transferred to the acceptor end of tRNA(Thr). Also edits incorrectly charged L-seryl-tRNA(Thr). The protein is Threonine--tRNA ligase of Mycobacterium sp. (strain KMS).